The chain runs to 460 residues: UDP-N-acetylmuramate--L-alanine ligase (460 aa).

G118 to T124 is an ATP binding site.

Belongs to the MurCDEF family.

It localises to the cytoplasm. It carries out the reaction UDP-N-acetyl-alpha-D-muramate + L-alanine + ATP = UDP-N-acetyl-alpha-D-muramoyl-L-alanine + ADP + phosphate + H(+). It functions in the pathway cell wall biogenesis; peptidoglycan biosynthesis. Functionally, cell wall formation. In Clostridium botulinum (strain Alaska E43 / Type E3), this protein is UDP-N-acetylmuramate--L-alanine ligase.